Reading from the N-terminus, the 470-residue chain is UTP--glucose-1-phosphate uridylyltransferase 1 (470 aa).

At Ala-2 the chain carries N-acetylalanine. UTP-binding positions include 86–89 (LNGG), Lys-100, Gln-163, and Gly-192. Residue 88 to 89 (GG) coordinates substrate. Residues His-193 and 221-223 (NSD) contribute to the substrate site. Positions 223 and 361 each coordinate UTP.

The protein belongs to the UDPGP type 1 family. As to expression, expressed in roots, rosette leaves, cauline leaves, stems, flowers and siliques.

It localises to the cytoplasm. It catalyses the reaction alpha-D-glucose 1-phosphate + UTP + H(+) = UDP-alpha-D-glucose + diphosphate. Its function is as follows. Converts glucose 1-phosphate to UDP-glucose, which is the major glycosyl donor for polysaccharides. Acts redundantly with UGP2 and is essential for the synthesis of sucrose, starch and cell wall, and callose deposition. Involved in the regulation of the programmed cell death (PCD) induced by the fungal toxin fumonisin B1 (FB1). The protein is UTP--glucose-1-phosphate uridylyltransferase 1 of Arabidopsis thaliana (Mouse-ear cress).